Consider the following 68-residue polypeptide: Large ribosomal subunit protein bL35 (68 aa).

Basic residues-rich tracts occupy residues 1 to 15 (MPKMKSHSGTKKRFK) and 23 to 38 (TARKAGKRHLNEHKSS). The interval 1–38 (MPKMKSHSGTKKRFKVTGSGKVTARKAGKRHLNEHKSS) is disordered.

The protein belongs to the bacterial ribosomal protein bL35 family.

This chain is Large ribosomal subunit protein bL35, found in Cutibacterium acnes (strain DSM 16379 / KPA171202) (Propionibacterium acnes).